A 195-amino-acid chain; its full sequence is MRVAEVVRNTSETQIRVKLDLDGTGQQKLATGVPFLDHMLDQIARHGLVDLEVEAHGDTHIDDHHTVEDVGITLGQAVAKAIGDRKGIRRYGHSYVPLDEALSRVVIDFSGRPGLEFHVPFTRARIGTFDVDLSIEFFRGFVNHAGVTLHIDNLRGINAHHQLETVFKAFGRALRAAVELDERAAGQIPSTKGSL.

Belongs to the imidazoleglycerol-phosphate dehydratase family.

It localises to the cytoplasm. The enzyme catalyses D-erythro-1-(imidazol-4-yl)glycerol 3-phosphate = 3-(imidazol-4-yl)-2-oxopropyl phosphate + H2O. It functions in the pathway amino-acid biosynthesis; L-histidine biosynthesis; L-histidine from 5-phospho-alpha-D-ribose 1-diphosphate: step 6/9. This chain is Imidazoleglycerol-phosphate dehydratase, found in Burkholderia cenocepacia (strain ATCC BAA-245 / DSM 16553 / LMG 16656 / NCTC 13227 / J2315 / CF5610) (Burkholderia cepacia (strain J2315)).